We begin with the raw amino-acid sequence, 512 residues long: 2'-5'-oligoadenylate synthase-like protein 1 (512 aa).

Ubiquitin-like domains lie at 351–430 (IQVT…ISPE) and 431–507 (IQVF…EGKA).

The protein belongs to the 2-5A synthase family. In terms of assembly, specifically interacts with the ligand binding domain of the thyroid receptor (TR). TRIP14 does not require the presence of thyroid hormone for its interaction. Binds MBD1.

The protein localises to the nucleus. Its subcellular location is the nucleolus. The protein resides in the cytoplasm. Functionally, does not have 2'-5'-OAS activity, but can bind double-stranded RNA. Displays antiviral activity via an alternative antiviral pathway independent of RNase L. The sequence is that of 2'-5'-oligoadenylate synthase-like protein 1 (Oasl) from Rattus norvegicus (Rat).